Reading from the N-terminus, the 889-residue chain is Phosphofurin acidic cluster sorting protein 2 (889 aa).

Disordered regions lie at residues Asp180–Thr246, Leu293–Arg463, and Ser687–Val740. Residues Ser343 to Arg358 are compositionally biased toward basic and acidic residues. Phosphoserine is present on residues Ser390, Ser416, Ser453, Ser691, and Ser694. 2 stretches are compositionally biased toward low complexity: residues Ser687–Ser720 and Pro727–Ser737.

It belongs to the PACS family. In terms of assembly, interacts with BID and PKD2. Interacts with SIRT1. Interacts with HDAC1. Interacts with TRPV1. Interacts with WDR37. As to quaternary structure, (Microbial infection) Interacts with HIV-1 Nef. As to expression, broadly expressed, with greatest levels in skeletal muscle followed by heart, brain, pancreas and testis.

It is found in the endoplasmic reticulum. The protein resides in the mitochondrion. Functionally, multifunctional sorting protein that controls the endoplasmic reticulum (ER)-mitochondria communication, including the apposition of mitochondria with the ER and ER homeostasis. In addition, in response to apoptotic inducer, translocates BIB to mitochondria, which initiates a sequence of events including the formation of mitochondrial truncated BID, the release of cytochrome c, the activation of caspase-3 thereby causing cell death. May also be involved in ion channel trafficking, directing acidic cluster-containing ion channels to distinct subcellular compartments. The chain is Phosphofurin acidic cluster sorting protein 2 from Homo sapiens (Human).